Here is a 556-residue protein sequence, read N- to C-terminus: Solute carrier family 22 member 20 (556 aa).

The Cytoplasmic portion of the chain corresponds to 1–15 (MAFTDLLDALGGVGR). A helical transmembrane segment spans residues 16 to 36 (FQLVYTALLLLPCGLLACHTF). The Extracellular portion of the chain corresponds to 37–137 (LQNFTAAAPP…LVCEARTLRD (101 aa)). Residues Asn39, Asn54, Asn61, and Asn96 are each glycosylated (N-linked (GlcNAc...) asparagine). A helical membrane pass occupies residues 138–158 (LAQSIYMSGVLVGAALFGGLA). The Cytoplasmic portion of the chain corresponds to 159-166 (DRLGRKAP). The chain crosses the membrane as a helical span at residues 167–187 (LVWSYLQLAVSGAATAYVGSF). Topologically, residues 188–194 (SAYCVFR) are extracellular. The chain crosses the membrane as a helical span at residues 195–215 (FLMGMTFSGIILNSLSLVVEW). Residues 216-225 (MPTRGRTVAG) lie on the Cytoplasmic side of the membrane. The helical transmembrane segment at 226 to 246 (ILLGFSFTLGQLILAGVAYLI) threads the bilayer. At 247–250 (RPWR) the chain is on the extracellular side. The helical transmembrane segment at 251–271 (WLQFAVSAPFLVFFLYSWWLP) threads the bilayer. At 272-339 (ESSRWLLLHG…DLFRTPAIRR (68 aa)) the chain is on the cytoplasmic side. The chain crosses the membrane as a helical span at residues 340 to 360 (VTCCLMGVWFSNSVAYYGLAM). Topologically, residues 361 to 366 (DLQKFG) are extracellular. Residues 367-387 (LSIYLVQALFGIIDIPAMLVA) traverse the membrane as a helical segment. At 388-397 (TTTMIYVGRR) the chain is on the cytoplasmic side. Residues 398-418 (ATVSSFLILAGLMVIANMFMP) traverse the membrane as a helical segment. The Extracellular portion of the chain corresponds to 419-425 (EDLQTLR). Residues 426–446 (TVQAALGKGCLASSFICVYLF) traverse the membrane as a helical segment. Residues 447–457 (TGELYPTEIRQ) lie on the Cytoplasmic side of the membrane. Residues 458–478 (MGMGFASVNARLGGLVAPLIT) traverse the membrane as a helical segment. Topologically, residues 479–485 (TLGEISP) are extracellular. The chain crosses the membrane as a helical span at residues 486–506 (VLPPVSFGATSVLAGMAVACF). Residues 507–556 (LTETRNVPLVETIAAMERRVKQGRSKRDTEQKSEEISLQQLGASPLKETI) are Cytoplasmic-facing. A compositionally biased stretch (basic and acidic residues) spans 526-541 (VKQGRSKRDTEQKSEE). The segment at 526–556 (VKQGRSKRDTEQKSEEISLQQLGASPLKETI) is disordered.

The protein belongs to the major facilitator (TC 2.A.1) superfamily. Organic cation transporter (TC 2.A.1.19) family. In terms of tissue distribution, highly expressed in olfactory mucosa. Weakly expressed in testis. Not detected in heart, spleen, lung, kidney or brain.

It is found in the membrane. Organic anion transporter that mediates the uptake of estrone sulfate. Inhibited by probenecid, propionate, 2-methylbutyrate, 3-methylbutyrate, benzoate, heptanoate and 2-ethylhaxanoate. May act as an odorant transporter. The chain is Solute carrier family 22 member 20 (Slc22a20) from Mus musculus (Mouse).